The following is a 63-amino-acid chain: Iota-crystallin (63 aa).

This sequence belongs to the calycin superfamily. Fatty-acid binding protein (FABP) family.

Functionally, binds vitamin A2 in the eye lens and thus functions as a UV filter. Intracellular transport of retinol. This chain is Iota-crystallin (CRBPI), found in Gonatodes vittatus (Wiegmann's striped gecko).